A 219-amino-acid chain; its full sequence is Holliday junction branch migration complex subunit RuvA (219 aa).

The tract at residues 1–66 is domain I; that stretch reads MIEYIIGKIS…NFLFEYYGFK (66 aa). The interval 67-148 is domain II; it reads TLREKIFFEN…SEYNNDVNHS (82 aa). Residues 149–154 form a flexible linker region; that stretch reads SINQQS. Positions 155 to 219 are domain III; that stretch reads NSYNPVPDLV…EAVTNKTTVS (65 aa).

It belongs to the RuvA family. As to quaternary structure, homotetramer. Forms an RuvA(8)-RuvB(12)-Holliday junction (HJ) complex. HJ DNA is sandwiched between 2 RuvA tetramers; dsDNA enters through RuvA and exits via RuvB. An RuvB hexamer assembles on each DNA strand where it exits the tetramer. Each RuvB hexamer is contacted by two RuvA subunits (via domain III) on 2 adjacent RuvB subunits; this complex drives branch migration. In the full resolvosome a probable DNA-RuvA(4)-RuvB(12)-RuvC(2) complex forms which resolves the HJ.

The protein resides in the cytoplasm. In terms of biological role, the RuvA-RuvB-RuvC complex processes Holliday junction (HJ) DNA during genetic recombination and DNA repair, while the RuvA-RuvB complex plays an important role in the rescue of blocked DNA replication forks via replication fork reversal (RFR). RuvA specifically binds to HJ cruciform DNA, conferring on it an open structure. The RuvB hexamer acts as an ATP-dependent pump, pulling dsDNA into and through the RuvAB complex. HJ branch migration allows RuvC to scan DNA until it finds its consensus sequence, where it cleaves and resolves the cruciform DNA. The polypeptide is Holliday junction branch migration complex subunit RuvA (Malacoplasma penetrans (strain HF-2) (Mycoplasma penetrans)).